We begin with the raw amino-acid sequence, 1289 residues long: MDTEFANANHPLHFLHRLLPAVGPGLLIAIGYVDPGKWAATVEGGARFGFDLVLPMLLFNFVAILCQYLSARIGVITRKDLAQICNDEYDKWTCMFLGVQAALSVIALDLTMILGIAHGLNLLFGMDLSTCVSLAAAEAILFPFFATLMERCKASFLCTCIAGFILLLYFFGVLISQPGIPLSINGTRTKLSEESVFALMSLLGASIMPHNFFLHSAIVLQHQGPPNISRDALCLNHFFAILCIFSGIYLVNFVLMNSAANVFHSTGLVLLTFPDAMSLMEQVFRSPVAPFGFSLILFFANQITAFSWNLGGQVVLHNFLRLDIPNWLQRATFRIIAVVPALYCVWTSGVEGIYQLLILTQVMVALLLPSSVIPLFHIASSRQVMGVYKISPFLEFVALISFMGMLGIKIIFVVEMVFGDSDWVGTLRWSTVSGSSTSYIVLLITACSSFCLMLWLAATPLKSATRLDAQVCNWDVQNAVSEPSTLIEEEFLTENICTGEELIERQEQLPEPGKSFESYSNITVANADPDLPETIMESDQELHLTTIKEKHSEVAFSSPQTFYEETSPTTESASLSASVNLVPDAELLVAKKAKIESMDPVEKTLDIEGELHTEKEDDEGDNWEPEDSSKGVPGSTLSLTSDGPGSFRSLSGKSDAGGNGAGSLSRLAGLGRAARRQLAAVLDEFWGQLYDFHGQITQEAKTKKLDALGVDLKLASSQLKVDTAGKESSGYFSLVGGRASDSLINSSLCDSPKQLRVQSNIDSSYGVQRGPSSLWSNHMQLLDAYVQGPSQSIADSSERRYSGVRTPPSSDGWDNQPATVHGYQIASIANRIAKDRGFSSLNGQMESPAPISPSLGPRNYRDPLTVSMGKNLQNGLSSSQASGFQNLAVTRNSPLQSERPYHDVYSGSADDTGMSANTKKYHSLPDISGLAGPYRDLYMSEKNAQWDKSAGFGSSVGRSAYEQSYYSNTGSGAGGPLSFNGLSKGHGDAFSLHMTPDPGSLWSKQPFEQFGVADKIRAVGSGLGNRSNSINREVTSPVDSEAQLLRSFRHCIVKLLKLEGSDWLFRQNDGADEDLIDCVAARERYLYEAETREMNHVDHMGGSTYLYSDRKSGSALRNDDASITNIMVSSVPHCGEGCVWRSDLIISFGVWCIHRILDLSLMESRPELWGKYTYVLNRLQGIIELAFSKPRTPMSPCFCLQIPASHQHRSSPPASNGMLPPASKPGRGKCTTAATLLDLIKDVEIAISCRKGRSGTAAGDVAFPKGKENLASVLKRYKRRLSNKLIGSK.

Transmembrane regions (helical) follow at residues 18 to 38 (LLPAVGPGLLIAIGYVDPGKW), 48 to 68 (FGFDLVLPMLLFNFVAILCQY), 96 to 116 (FLGVQAALSVIALDLTMILGI), 128 to 148 (LSTCVSLAAAEAILFPFFATL), and 155 to 175 (SFLCTCIAGFILLLYFFGVLI). Asn-185 is a glycosylation site (N-linked (GlcNAc...) asparagine). A helical membrane pass occupies residues 199–219 (LMSLLGASIMPHNFFLHSAIV). Residue Asn-227 is glycosylated (N-linked (GlcNAc...) asparagine). Helical transmembrane passes span 235–255 (LNHFFAILCIFSGIYLVNFVL), 260–280 (ANVFHSTGLVLLTFPDAMSLM), 288–308 (VAPFGFSLILFFANQITAFSW), 335–355 (IIAVVPALYCVWTSGVEGIYQ), 356–376 (LLILTQVMVALLLPSSVIPLF), 393–413 (FLEFVALISFMGMLGIKIIFV), and 439–459 (YIVLLITACSSFCLMLWLAAT). Asn-521 carries an N-linked (GlcNAc...) asparagine glycan. Residues 611 to 659 (LHTEKEDDEGDNWEPEDSSKGVPGSTLSLTSDGPGSFRSLSGKSDAGGN) form a disordered region. The span at 616–626 (EDDEGDNWEPE) shows a compositional bias: acidic residues. A compositionally biased stretch (polar residues) spans 635–652 (STLSLTSDGPGSFRSLSG). Phosphoserine is present on residues Ser-646 and Ser-663. Residue Asn-745 is glycosylated (N-linked (GlcNAc...) asparagine). Residues 792–816 (SIADSSERRYSGVRTPPSSDGWDNQ) are disordered. Polar residues predominate over residues 807 to 816 (PPSSDGWDNQ). Position 819 is a phosphothreonine (Thr-819). Ser-923 bears the Phosphoserine mark. Asn-1025 is a glycosylation site (N-linked (GlcNAc...) asparagine). A disordered region spans residues 1208–1227 (HRSSPPASNGMLPPASKPGR). Residues 1274–1281 (LKRYKRRL) carry the Nuclear localization signal motif.

This sequence belongs to the NRAMP (TC 2.A.55) family.

It localises to the endoplasmic reticulum membrane. The protein resides in the nucleus. It is found in the cytoplasm. Its function is as follows. Central factor in signaling pathways regulated by ethylene (ET) and involved in various processes including development, plant defense, senescence, nucleotide sugar flux, and tropisms. Functionally, trafficking signal inducing ethylene response. The nuclear localization is both necessary and sufficient to activate EIN3-mediated transcription and ethylene responses. In Populus trichocarpa (Western balsam poplar), this protein is Ethylene-insensitive protein 2.1.